We begin with the raw amino-acid sequence, 597 residues long: Spastin (597 aa).

Topologically, residues 1-20 (MPNNDILRPLAIPAKYVGSF) are cytoplasmic. The segment at residues 21–37 (LVFLYNGLYFVFVVNLW) is an intramembrane region (helical). The Cytoplasmic segment spans residues 38–597 (SRLFGKATKT…DWNRLYGSNA (560 aa)). A disordered region spans residues 56–80 (RKLGKDMASRAPPRRGQSSEDNEDG). The 78-residue stretch at 91–168 (HHKQAYAYIA…ENTRERMDEL (78 aa)) folds into the MIT domain. Residues 193–289 (SARKTSSEPS…PAMMAKQSCV (97 aa)) are disordered. A compositionally biased stretch (polar residues) spans 214 to 231 (SYKQSKSYKNSTTVTTKR). Residues 232-252 (SQASPSFSSSSSSVNSTAGSS) show a composition bias toward low complexity.

It belongs to the AAA ATPase family. Spastin subfamily. As to quaternary structure, homohexamer. The homohexamer is stabilized by ATP-binding. The homohexamer may adopt a ring conformation through which microtubules pass prior to being severed. Interacts with microtubules.

It localises to the membrane. It is found in the cytoplasm. The protein resides in the cytoskeleton. Its subcellular location is the microtubule organizing center. The protein localises to the centrosome. It catalyses the reaction n ATP + n H2O + a microtubule = n ADP + n phosphate + (n+1) alpha/beta tubulin heterodimers.. Functionally, ATP-dependent microtubule severing protein. Microtubule severing may promote reorganization of cellular microtubule arrays and the release of microtubules from the microtubule organizing center following nucleation. The protein is Spastin of Nematostella vectensis (Starlet sea anemone).